A 274-amino-acid chain; its full sequence is uncharacterized protein (274 aa).

Positions 253 to 274 (QTGDVRTTEGTALTDDTTKRNI) are disordered.

This is an uncharacterized protein from Deinococcus radiodurans (strain ATCC 13939 / DSM 20539 / JCM 16871 / CCUG 27074 / LMG 4051 / NBRC 15346 / NCIMB 9279 / VKM B-1422 / R1).